A 278-amino-acid chain; its full sequence is Undecaprenyl-diphosphatase 3 (278 aa).

The next 6 helical transmembrane spans lie at Asp42–Phe62, Tyr88–Phe108, Leu119–Val139, Val187–Leu207, Ala224–Leu244, and Val254–Ile274.

It belongs to the UppP family.

The protein localises to the cell membrane. The catalysed reaction is di-trans,octa-cis-undecaprenyl diphosphate + H2O = di-trans,octa-cis-undecaprenyl phosphate + phosphate + H(+). Its function is as follows. Catalyzes the dephosphorylation of undecaprenyl diphosphate (UPP). Confers resistance to bacitracin. The chain is Undecaprenyl-diphosphatase 3 from Frankia casuarinae (strain DSM 45818 / CECT 9043 / HFP020203 / CcI3).